The primary structure comprises 24 residues: Defensin D5 (24 aa).

Belongs to the DEFL family. Group IV subfamily. Distributed in the epidermal cell layer of leaves and in the subepidermal layer region of stems. Not in roots.

It is found in the secreted. Its subcellular location is the cell wall. In terms of biological role, antimicrobial peptide. Active against Fusarium spp., Gram-positive and Gram-negative bacterial pathogens. The chain is Defensin D5 from Spinacia oleracea (Spinach).